The chain runs to 31 residues: Cycloviolacin-O14 (31 aa).

Positions 1–31 (GSIPACGESCFKGKCYTPGCSCSKYPLCAKN) form a cross-link, cyclopeptide (Gly-Asn). Disulfide bonds link Cys6/Cys20, Cys10/Cys22, and Cys15/Cys28.

Post-translationally, this is a cyclic peptide. In terms of tissue distribution, expressed in leaves and petioles but not in petals, roots and runners (at protein level).

Its function is as follows. Probably participates in a plant defense mechanism. Has hemolytic activity. The protein is Cycloviolacin-O14 of Viola odorata (Sweet violet).